The following is a 351-amino-acid chain: UDP-3-O-acylglucosamine N-acyltransferase 1 (351 aa).

His237 serves as the catalytic Proton acceptor.

The protein belongs to the transferase hexapeptide repeat family. LpxD subfamily. As to quaternary structure, homotrimer.

The enzyme catalyses a UDP-3-O-[(3R)-3-hydroxyacyl]-alpha-D-glucosamine + a (3R)-hydroxyacyl-[ACP] = a UDP-2-N,3-O-bis[(3R)-3-hydroxyacyl]-alpha-D-glucosamine + holo-[ACP] + H(+). Its pathway is bacterial outer membrane biogenesis; LPS lipid A biosynthesis. Catalyzes the N-acylation of UDP-3-O-acylglucosamine using 3-hydroxyacyl-ACP as the acyl donor. Is involved in the biosynthesis of lipid A, a phosphorylated glycolipid that anchors the lipopolysaccharide to the outer membrane of the cell. The chain is UDP-3-O-acylglucosamine N-acyltransferase 1 from Legionella pneumophila (strain Paris).